An 884-amino-acid polypeptide reads, in one-letter code: Putative GTP diphosphokinase RSH1, chloroplastic (884 aa).

Residues 1–55 (MTSASSMSVSVECVNICNLTKGDGNARSDCSALSCAWKAPRALTGFLASTAHPPV) constitute a chloroplast transit peptide. One can recognise an HD domain in the interval 172–279 (FIIHPVAVAR…VKLADRLHNM (108 aa)). Residues 563 to 626 (LGSRVFVFTP…ENAEVVEIVT (64 aa)) enclose the TGS domain. Residues 711–727 (QSQDKSRDTTPAPQNGS) show a composition bias toward polar residues. The interval 711–747 (QSQDKSRDTTPAPQNGSVWAPKVNGKHNKAIKNSSSD) is disordered. One can recognise an ACT domain in the interval 797–868 (WLCVVSMDRK…LVLGVLGWSS (72 aa)).

It belongs to the RelA/SpoT family. In terms of assembly, interacts with RPP4. Interacts with RPP5. As to expression, expressed in hypocotyls, shoots, cotyledons, rosette leaves, sepals and pistils.

Its subcellular location is the plastid. It localises to the chloroplast. It carries out the reaction GTP + ATP = guanosine 3'-diphosphate 5'-triphosphate + AMP. Functionally, may be involved in a rapid plant ppGpp (guanosine 3'-diphosphate 5'-diphosphate)-mediated response to pathogens and other stresses. Unable to functionally complement E.coli relA mutants. This chain is Putative GTP diphosphokinase RSH1, chloroplastic (RSH1), found in Arabidopsis thaliana (Mouse-ear cress).